We begin with the raw amino-acid sequence, 920 residues long: Puromycin-sensitive aminopeptidase (920 aa).

Residues Glu181 and 317–321 (GAMEN) each bind substrate. Zn(2+) is bound at residue His353. Glu354 serves as the catalytic Proton acceptor. Residues His357 and Glu376 each coordinate Zn(2+). The residue at position 465 (Tyr465) is a 3'-nitrotyrosine. Positions 727–731 (RRRFK) match the Nuclear localization signal motif.

Belongs to the peptidase M1 family. In terms of assembly, monomer. It depends on Zn(2+) as a cofactor. Widely expressed. Highest expression in brain, particularly the striatum and hippocampus. Expressed in Sertoli cells.

The protein localises to the cytoplasm. It is found in the cytosol. Its subcellular location is the nucleus. It carries out the reaction Release of an N-terminal amino acid, preferentially alanine, from a wide range of peptides, amides and arylamides.. With respect to regulation, strongly inhibited by bestatin, leuhistin, actinonin, amastatin, 1,10-phenanthroline, DFP, PCMBS, Zn(2+), Cd(2+), Co(2+), Cu(2+), Hg(2+), EDTA and puromycin. Not inhibited by PMSF, and only slightly inhibited by leupeptin and aprotinin. Activity is increased by Mg(2+) and Ca(2+). Its function is as follows. Aminopeptidase with broad substrate specificity for several peptides. Involved in proteolytic events essential for cell growth and viability. May act as regulator of neuropeptide activity. Plays a role in the antigen-processing pathway for MHC class I molecules. Involved in the N-terminal trimming of cytotoxic T-cell epitope precursors. Digests the poly-Q peptides found in many cellular proteins. This is Puromycin-sensitive aminopeptidase (Npepps) from Mus musculus (Mouse).